A 908-amino-acid polypeptide reads, in one-letter code: Flap endonuclease GEN homolog 1 (908 aa).

The segment at 2–96 (GVNDLWQILE…SKRNQSRYGS (95 aa)) is XPG-N domain. Aspartate 30, glutamate 75, glutamate 134, glutamate 136, aspartate 155, aspartate 157, and aspartate 208 together coordinate Mg(2+). The interval 122–208 (ECLGIPWVQA…VGLAILLGCD (87 aa)) is XPG-I domain. The segment at 208–384 (DYLPKGVPGV…LLVLLTHYDM (177 aa)) is 5'-3' exonuclease domain. The interval 390-464 (GSRNSNQLQP…VYQKQKLEIK (75 aa)) is chromodomain. Phosphoserine is present on residues serine 801 and serine 802.

Belongs to the XPG/RAD2 endonuclease family. GEN subfamily. As to quaternary structure, largely monomeric, dimerizes on the Holliday junction and the first nick occurs upon dimerization at the junction. Mg(2+) serves as cofactor.

It localises to the nucleus. Its function is as follows. Endonuclease which resolves Holliday junctions (HJs) by the introduction of symmetrically related cuts across the junction point, to produce nicked duplex products in which the nicks can be readily ligated. Four-way DNA intermediates, also known as Holliday junctions, are formed during homologous recombination and DNA repair, and their resolution is necessary for proper chromosome segregation. Cleaves HJs by a nick and counter-nick mechanism involving dual coordinated incisions that lead to the formation of ligatable nicked duplex products. Cleavage of the first strand is rate limiting, while second strand cleavage is rapid. Largely monomeric, dimerizes on the HJ and the first nick occurs upon dimerization at the junction. Efficiently cleaves both single and double HJs contained within large recombination intermediates. Exhibits a weak sequence preference for incision between two G residues that reside in a T-rich region of DNA. Also has endonuclease activity on 5'-flap and replication fork (RF) DNA substrates. The polypeptide is Flap endonuclease GEN homolog 1 (GEN1) (Homo sapiens (Human)).